The following is a 327-amino-acid chain: Sphingomyelinase D (327 aa).

The first 23 residues, 1-23, serve as a signal peptide directing secretion; it reads MQPLTRTICALFCLLLTLPLTFG. His-52 is a catalytic residue. Mg(2+) is bound by residues Glu-72, Asp-74, and Asp-117. Positions 320-327 match the SMD-tail motif; that stretch reads VTGADKLW.

It belongs to the sphingomyelinase D/phospholipase D family. The cofactor is Mg(2+).

It localises to the secreted. The catalysed reaction is a sphingomyelin + H2O = an N-acylsphing-4-enine 1-phosphate + choline + H(+). Functionally, catalyzes the hydrolysis of sphingomyelin. Sphingomyelinases D are produced by some spider in their venoms, but also by arthropods such as ticks, or pathogenic bacteria and fungi. They might play a role in pathogenicity through different mechanisms, such as membrane destabilization and host cell penetration, but also pulmonary inflammation and cutaneous lesions. The sequence is that of Sphingomyelinase D from Paracoccidioides brasiliensis (strain Pb03).